The following is a 402-amino-acid chain: Phosphoglycerate kinase (402 aa).

Substrate-binding positions include 24–26, arginine 40, 63–66, arginine 122, and arginine 155; these read DFN and HFGR. ATP-binding positions include lysine 206, glycine 297, glutamate 328, and 358–361; that span reads GGDS.

The protein belongs to the phosphoglycerate kinase family. In terms of assembly, monomer.

The protein localises to the cytoplasm. The enzyme catalyses (2R)-3-phosphoglycerate + ATP = (2R)-3-phospho-glyceroyl phosphate + ADP. Its pathway is carbohydrate degradation; glycolysis; pyruvate from D-glyceraldehyde 3-phosphate: step 2/5. In Prochlorococcus marinus (strain MIT 9301), this protein is Phosphoglycerate kinase.